The chain runs to 414 residues: Nuclear hormone receptor family member nhr-213 (414 aa).

Positions 21–99 form a DNA-binding region, nuclear receptor; the sequence is IVLCKVCALS…LGMTPENVQF (79 aa). 2 NR C4-type zinc fingers span residues 24 to 44 and 62 to 82; these read CKVCALSAHGSHFGVLACRAC and CKKGKNECPVDTAERYQCRLC. Positions 162-414 constitute an NR LBD domain; that stretch reads SAAKKMNSLE…DFSDPDIFDC (253 aa).

Belongs to the nuclear hormone receptor family.

It is found in the nucleus. Its function is as follows. Orphan nuclear receptor. In Caenorhabditis elegans, this protein is Nuclear hormone receptor family member nhr-213 (nhr-213).